The following is a 136-amino-acid chain: Mini-ribonuclease 3 (136 aa).

Residue D20 is part of the active site.

Belongs to the MrnC RNase family. Homodimer. It depends on Mg(2+) as a cofactor.

The protein localises to the cytoplasm. In terms of biological role, involved in correct processing of both the 5' and 3' ends of 23S rRNA precursor. Processes 30S rRNA precursor transcript even in absence of ribonuclease 3 (Rnc); Rnc processes 30S rRNA into smaller rRNA precursors. The chain is Mini-ribonuclease 3 from Listeria monocytogenes serovar 1/2a (strain ATCC BAA-679 / EGD-e).